Reading from the N-terminus, the 161-residue chain is Putative HTH-type transcriptional regulator MT1325 (161 aa).

One can recognise an HTH rrf2-type domain in the interval 2 to 132 (RMSAKAEYAV…EETTLADVAG (131 aa)).

The polypeptide is Putative HTH-type transcriptional regulator MT1325 (Mycobacterium tuberculosis (strain CDC 1551 / Oshkosh)).